Here is a 494-residue protein sequence, read N- to C-terminus: MTNWQQQLPLTDTQKNELDKSVLRYLNWNYKQTVRHEHAQDYESVRHAIVTLSGFLLQESVDRQEFISNNDTSNESMVDIDELLLPKKWNSIVRLQKKIIELEQNTETLVSQIKDLNTQVSELAQFKPTTSNGTSAHNVLKWIPRNLPSCLINVESSVTSVKLHPNLPIVFVATDHGKLYAFDLFNYTIPLASLQSHTKAITSMDVLFTNYTNSSKKNYLVIVTASKDLQIHVFKWVSEECKFQQIRSLLGHEHIVSAVKIWQKNNDVHIASCSRDQTVKIWDFHNGWSLKTFQPHSQWVRSIDVLGDYIISGSHDTTLRLTHWPSGNGLSVGTGHEFPIEKVKFIHFIEDSPEIRFRTPSTDRYKNWGMQYCVSASRDRTIKIWEIPLPTLMAHRAPIPNPTDSNFRCVLTLKGHLSWVRDISIRGQYLFSCADDKSVRCWDLNTGQCLHVWEKLHTGFVNCLDLDVDFDSNVTPRQMMVTGGLDCKSNVFMR.

Residues 14 to 46 (QKNELDKSVLRYLNWNYKQTVRHEHAQDYESVR) enclose the LisH domain. Residues 90-123 (NSIVRLQKKIIELEQNTETLVSQIKDLNTQVSEL) adopt a coiled-coil conformation. WD repeat units follow at residues 153–192 (NVES…IPLA), 196–244 (SHTK…CKFQ), 251–292 (GHEH…SLKT), 295–334 (PHSQ…SVGT), 347–395 (HFIE…LMAH), 415–454 (GHLS…HVWE), and 457–492 (HTGF…SNVF).

The protein belongs to the WD repeat LIS1/nudF family. Self-associates. Interacts with NDL1 and dynein.

It localises to the cytoplasm. It is found in the cytoskeleton. Its subcellular location is the spindle pole. Functionally, positively regulates the activity of the minus-end directed microtubule motor protein dynein. Plays a central role in positioning the mitotic spindle at the bud neck during cell division. Targets cytoplasmic dynein to microtubule plus ends, thereby promoting dynein-mediated microtubule sliding along the bud cortex and consequently the movement of the mitotic spindle to the bud neck. The chain is Nuclear distribution protein PAC1 from Saccharomyces cerevisiae (strain YJM789) (Baker's yeast).